The primary structure comprises 273 residues: Thioredoxin-like 1-3, chloroplastic (273 aa).

A chloroplast-targeting transit peptide spans 1-44 (MATDSFIKLNPISFNRARFDLRDFAGISPKSISSLCCISPRLIS). One can recognise a Thioredoxin domain in the interval 62–202 (LFSKKKIPAF…FKEALEKHGR (141 aa)). Residues cysteine 125 and cysteine 128 each act as nucleophile in the active site. Cysteine 125 and cysteine 128 are oxidised to a cystine.

This sequence belongs to the thioredoxin family.

The protein localises to the plastid. It localises to the chloroplast. Probable thiol-disulfide oxidoreductase that may participate in various redox reactions. The protein is Thioredoxin-like 1-3, chloroplastic of Arabidopsis thaliana (Mouse-ear cress).